We begin with the raw amino-acid sequence, 174 residues long: ATP-dependent protease subunit HslV (174 aa).

T4 is an active-site residue. Na(+) is bound by residues A159, C162, and T165.

This sequence belongs to the peptidase T1B family. HslV subfamily. In terms of assembly, a double ring-shaped homohexamer of HslV is capped on each side by a ring-shaped HslU homohexamer. The assembly of the HslU/HslV complex is dependent on binding of ATP.

The protein resides in the cytoplasm. The catalysed reaction is ATP-dependent cleavage of peptide bonds with broad specificity.. Its activity is regulated as follows. Allosterically activated by HslU binding. Its function is as follows. Protease subunit of a proteasome-like degradation complex believed to be a general protein degrading machinery. This chain is ATP-dependent protease subunit HslV, found in Moorella thermoacetica (strain ATCC 39073 / JCM 9320).